The sequence spans 188 residues: Elongation factor P (188 aa).

This sequence belongs to the elongation factor P family.

It is found in the cytoplasm. It participates in protein biosynthesis; polypeptide chain elongation. In terms of biological role, involved in peptide bond synthesis. Stimulates efficient translation and peptide-bond synthesis on native or reconstituted 70S ribosomes in vitro. Probably functions indirectly by altering the affinity of the ribosome for aminoacyl-tRNA, thus increasing their reactivity as acceptors for peptidyl transferase. This is Elongation factor P from Natranaerobius thermophilus (strain ATCC BAA-1301 / DSM 18059 / JW/NM-WN-LF).